Consider the following 556-residue polypeptide: Trigger factor (556 aa).

The PPIase FKBP-type domain maps to 169–255; it reads GDVVVIDFAA…LREIKAKELP (87 aa). Residues 438–452 show a composition bias toward polar residues; it reads VDSEGNPTQAPTSLA. The interval 438 to 556 is disordered; it reads VDSEGNPTQA…KPSKKDKKGK (119 aa). Over residues 461–472 the composition is skewed to acidic residues; sequence PEAEFEADEPEA. Low complexity-rich tracts occupy residues 486-503 and 511-526; these read ETAT…AEAE and EASP…AEAT.

It belongs to the FKBP-type PPIase family. Tig subfamily.

Its subcellular location is the cytoplasm. It catalyses the reaction [protein]-peptidylproline (omega=180) = [protein]-peptidylproline (omega=0). Involved in protein export. Acts as a chaperone by maintaining the newly synthesized protein in an open conformation. Functions as a peptidyl-prolyl cis-trans isomerase. The sequence is that of Trigger factor from Synechococcus sp. (strain JA-2-3B'a(2-13)) (Cyanobacteria bacterium Yellowstone B-Prime).